Reading from the N-terminus, the 1005-residue chain is Pikachurin (1005 aa).

Positions 1 to 24 (MDLISTFLLHFLLLACSLPPGAVS) are cleaved as a signal peptide. Fibronectin type-III domains lie at 37-136 (PPLD…TLSQ) and 144-239 (APHQ…TLGP). Asparagine 47 is a glycosylation site (N-linked (GlcNAc...) asparagine). Residues 281-328 (PATKVGNKKSKKTSVSNSEMDSRLAQPTSASLPETTVAVPPTPAQRKG) are disordered. Polar residues predominate over residues 305–314 (AQPTSASLPE). The EGF-like 1 domain occupies 339–377 (FDMSCDETLCSADSFCVNDYAWGGSRCHCNLGKGGEACS). 11 disulfide bridges follow: cysteine 343–cysteine 354, cysteine 348–cysteine 365, cysteine 367–cysteine 376, cysteine 530–cysteine 560, cysteine 565–cysteine 576, cysteine 570–cysteine 586, cysteine 588–cysteine 597, cysteine 784–cysteine 795, cysteine 789–cysteine 804, cysteine 806–cysteine 815, and cysteine 975–cysteine 1002. The region spanning 382-560 (IQYPQFFGHS…ALNGADVGEC (179 aa)) is the Laminin G-like 1 domain. 2 EGF-like domains span residues 561–598 (SSGICDEASCINGGTCAAIKADSYICLCPLGFRGRHCE) and 780–816 (AAHPCVGAPCAHGGSCRPRKEGYECDCPLGFEGLNCQ). One can recognise a Laminin G-like 2 domain in the interval 605–784 (IPQFRESLRS…VNVENAAHPC (180 aa)). Residues 823 to 1002 (IEIPQFIGRS…AVDGKNINTC (180 aa)) enclose the Laminin G-like 3 domain.

In terms of assembly, interacts with DAG1 alpha-dystroglycan. Interacts with GPR158 and GPR179; transsynaptic interaction is required for synaptic organization of photoreceptor cells. O-glycosylated; contains chondroitin sulfate and heparan sulfate.

It is found in the secreted. The protein resides in the extracellular space. The protein localises to the extracellular matrix. Its subcellular location is the synaptic cleft. It localises to the presynaptic active zone. Involved in both the retinal photoreceptor ribbon synapse formation and physiological functions of visual perception. Plays a key role in the synaptic organization of photoreceptors by mediating transsynaptic interaction between alpha-dystroglycan and GPR179 on the postsynaptic membrane. Necessary for proper bipolar dendritic tip apposition to the photoreceptor ribbon synapse. Promotes matrix assembly and cell adhesiveness. This is Pikachurin (Egflam) from Rattus norvegicus (Rat).